We begin with the raw amino-acid sequence, 536 residues long: Inactive phospholipase D5 (536 aa).

Over 1–68 the chain is Cytoplasmic; the sequence is MEIRQHEWLS…DKLEHSQQKC (68 aa). The helical transmembrane segment at 69–89 threads the bilayer; the sequence is IVIFALVCCFAVLVALIFSAV. Topologically, residues 90–536 are extracellular; that stretch reads DIMGEDEDGL…NATGREPLSV (447 aa). N121 carries N-linked (GlcNAc...) asparagine glycosylation. The PLD phosphodiesterase 1 domain occupies 215-242; sequence NKGRLQSSFWIVDKQHVYIGSAGLDWRS. N302 carries an N-linked (GlcNAc...) asparagine glycan. A PLD phosphodiesterase 2 domain is found at 434 to 460; that stretch reads FPKLNRNKYMVTDGAAYIGNFDWVGND. The segment at 503 to 536 is disordered; that stretch reads QPTKQPNCSSLSKLKSPSKQPAMANATGREPLSV. Residues 511–521 show a composition bias toward low complexity; it reads SSLSKLKSPSK.

It belongs to the phospholipase D family.

The protein localises to the membrane. This chain is Inactive phospholipase D5 (Pld5), found in Mus musculus (Mouse).